A 194-amino-acid polypeptide reads, in one-letter code: Flagellar transcriptional regulator FlhC (194 aa).

4 residues coordinate Zn(2+): C139, C142, C159, and C162.

Belongs to the FlhC family. Heterohexamer composed of two FlhC and four FlhD subunits. Each FlhC binds a FlhD dimer, forming a heterotrimer, and a hexamer assembles by dimerization of two heterotrimers. It depends on Zn(2+) as a cofactor.

It is found in the cytoplasm. Functions in complex with FlhD as a master transcriptional regulator that regulates transcription of several flagellar and non-flagellar operons by binding to their promoter region. Activates expression of class 2 flagellar genes, including fliA, which is a flagellum-specific sigma factor that turns on the class 3 genes. Also regulates genes whose products function in a variety of physiological pathways. This Serratia marcescens protein is Flagellar transcriptional regulator FlhC.